We begin with the raw amino-acid sequence, 92 residues long: Small ribosomal subunit protein bS20 (92 aa).

A disordered region spans residues 1–23; it reads MANTPSAKKRAKQAEKRRSHNAS. Positions 7–20 are enriched in basic residues; sequence AKKRAKQAEKRRSH.

It belongs to the bacterial ribosomal protein bS20 family.

Its function is as follows. Binds directly to 16S ribosomal RNA. The sequence is that of Small ribosomal subunit protein bS20 from Pseudomonas savastanoi pv. phaseolicola (strain 1448A / Race 6) (Pseudomonas syringae pv. phaseolicola (strain 1448A / Race 6)).